A 511-amino-acid polypeptide reads, in one-letter code: 2,3-bisphosphoglycerate-independent phosphoglycerate mutase (511 aa).

Residues Asp-12 and Ser-62 each contribute to the Mn(2+) site. The Phosphoserine intermediate role is filled by Ser-62. Residues His-123, 153-154 (RD), Arg-185, Arg-191, 260-263 (RPDR), and Lys-335 each bind substrate. Mn(2+) is bound by residues Asp-402, His-406, Asp-443, His-444, and His-462.

It belongs to the BPG-independent phosphoglycerate mutase family. In terms of assembly, monomer. The cofactor is Mn(2+).

It catalyses the reaction (2R)-2-phosphoglycerate = (2R)-3-phosphoglycerate. It participates in carbohydrate degradation; glycolysis; pyruvate from D-glyceraldehyde 3-phosphate: step 3/5. Catalyzes the interconversion of 2-phosphoglycerate and 3-phosphoglycerate. This chain is 2,3-bisphosphoglycerate-independent phosphoglycerate mutase, found in Acetivibrio thermocellus (strain ATCC 27405 / DSM 1237 / JCM 9322 / NBRC 103400 / NCIMB 10682 / NRRL B-4536 / VPI 7372) (Clostridium thermocellum).